A 492-amino-acid polypeptide reads, in one-letter code: N-succinylglutamate 5-semialdehyde dehydrogenase (492 aa).

220–225 (GRANTG) contributes to the NAD(+) binding site. Active-site residues include E243 and C277.

This sequence belongs to the aldehyde dehydrogenase family. AstD subfamily.

The enzyme catalyses N-succinyl-L-glutamate 5-semialdehyde + NAD(+) + H2O = N-succinyl-L-glutamate + NADH + 2 H(+). It functions in the pathway amino-acid degradation; L-arginine degradation via AST pathway; L-glutamate and succinate from L-arginine: step 4/5. Catalyzes the NAD-dependent reduction of succinylglutamate semialdehyde into succinylglutamate. The polypeptide is N-succinylglutamate 5-semialdehyde dehydrogenase (Shigella boydii serotype 18 (strain CDC 3083-94 / BS512)).